The primary structure comprises 1364 residues: Toxin subunit YenA2 (1364 aa).

A coiled-coil region spans residues 1025-1080; the sequence is SESYRRRRQEWELQYKQAEWEVNSVEQQINLQNMQIKAANKRLEQVEAQQQQAMAL.

As to quaternary structure, semipurified toxin complex consists of at least YenA1-YenA2-YenB-YenC1-YenC2-Chi1-Chi2. The Yen-TC:K9 subcomplex is about 26 nm tall and 22 nm in diameter with 5-fold symmetry and 5 copies of YenA1, YenA2, Chi1 and Chi2; the chitinase subunits may be solvent accessible on the exterior the complex. The Yen-TC:K9 subcomplex has no insecticidal activity. The native complex with additional YenB, YenC1 and YenC2 subunits is 16 nm taller and is insecticidal; the toxicity-conferring subunits are present at about 1 copy each. In terms of processing, the isolated toxin complex includes 3 peptides starting between residues 768 and 778 of this protein, which might be physiologically relevant.

The protein localises to the secreted. In terms of biological role, part of an orally active toxin complex (TC) with strong insecticidal effects on larvae of the Coleoptera Costelytra zealandica, Acrossidius tasmania and Adoryphorus couloni and some Lepidoptera larvae. The TC has an endochitinase activity. The sequence is that of Toxin subunit YenA2 from Yersinia entomophaga.